Reading from the N-terminus, the 395-residue chain is Probable eukaryotic translation initiation factor 5 (395 aa).

28 to 35 (GKGNGIKT) is a GTP binding site. 2 disordered regions span residues 146–171 (PPAK…AEDE) and 374–395 (LAEA…DDDE). The segment covering 147 to 157 (PAKKKSHKHKR) has biased composition (basic residues). Acidic residues-rich tracts occupy residues 161-170 (VAEEEDGAED) and 377-395 (ASDE…DDDE). Residues 228 to 384 (EEAESSRYDQ…AEASDESESE (157 aa)) enclose the W2 domain.

This sequence belongs to the eIF-2-beta/eIF-5 family. Monomer.

Its function is as follows. Catalyzes the hydrolysis of GTP bound to the 40S ribosomal initiation complex (40S.mRNA.Met-tRNA[F].eIF-2.GTP) with the subsequent joining of a 60S ribosomal subunit resulting in the release of eIF-2 and the guanine nucleotide. The subsequent joining of a 60S ribosomal subunit results in the formation of a functional 80S initiation complex (80S.mRNA.Met-tRNA[F]). This is Probable eukaryotic translation initiation factor 5 (tif5) from Schizosaccharomyces pombe (strain 972 / ATCC 24843) (Fission yeast).